Here is a 121-residue protein sequence, read N- to C-terminus: Large ribosomal subunit protein uL14 (121 aa).

This sequence belongs to the universal ribosomal protein uL14 family. In terms of assembly, part of the 50S ribosomal subunit. Forms a cluster with proteins L3 and L19. In the 70S ribosome, L14 and L19 interact and together make contacts with the 16S rRNA in bridges B5 and B8.

In terms of biological role, binds to 23S rRNA. Forms part of two intersubunit bridges in the 70S ribosome. This Synechococcus sp. (strain CC9902) protein is Large ribosomal subunit protein uL14.